The chain runs to 272 residues: GTP cyclohydrolase FolE2 (272 aa).

Belongs to the GTP cyclohydrolase IV family.

The enzyme catalyses GTP + H2O = 7,8-dihydroneopterin 3'-triphosphate + formate + H(+). It functions in the pathway cofactor biosynthesis; 7,8-dihydroneopterin triphosphate biosynthesis; 7,8-dihydroneopterin triphosphate from GTP: step 1/1. Its function is as follows. Converts GTP to 7,8-dihydroneopterin triphosphate. In Aromatoleum aromaticum (strain DSM 19018 / LMG 30748 / EbN1) (Azoarcus sp. (strain EbN1)), this protein is GTP cyclohydrolase FolE2.